The primary structure comprises 114 residues: Nucleoid-associated protein NT01CX_0824 (114 aa).

The protein belongs to the YbaB/EbfC family. Homodimer.

The protein localises to the cytoplasm. It is found in the nucleoid. Binds to DNA and alters its conformation. May be involved in regulation of gene expression, nucleoid organization and DNA protection. The protein is Nucleoid-associated protein NT01CX_0824 of Clostridium novyi (strain NT).